Here is a 399-residue protein sequence, read N- to C-terminus: MVKSITLVGSTGSIGTQTLDIVSQYPDQFRIVGLAAGSNVEMLAEQIRQFRPQIAAISAAEKLPALQAAIKDLDPQPILLGGEAGVIEVARYGDAETVVTGIVGCAGLLPTIAAIEAGKDIALANKETLIAGGPVVLPLVEKHGVKLLPADSEHSAIFQCLQGVPKGGLKKILLTASGGAFRDWDVERLAEVTVSDALKHPNWSMGRKITVDSATLMNKGLEVIEAHFLFGLDYQDIEIVIHPQSIIHSLIELQDTSVLAQLGWPDMRLPLLYALSWPERIYTDWERLNLVKAGNLTFREPDHQKYPCMQLAYAAGRAGGSMPAVLNAANEQVVALFLDEKIKFLDIPRCIELVCDRHQNDNCANPSLDDILAADQWARQEVLTATKNLASQPQIISVN.

NADPH is bound by residues Thr-11, Gly-12, Ser-13, Ile-14, Gly-37, Asn-39, and Asn-125. 1-deoxy-D-xylulose 5-phosphate is bound at residue Lys-126. Glu-127 is a binding site for NADPH. Residue Asp-151 participates in Mn(2+) binding. Positions 152, 153, 177, and 200 each coordinate 1-deoxy-D-xylulose 5-phosphate. Glu-153 lines the Mn(2+) pocket. Position 206 (Gly-206) interacts with NADPH. Residues Ser-213, Asn-218, Lys-219, and Glu-222 each contribute to the 1-deoxy-D-xylulose 5-phosphate site. Glu-222 is a binding site for Mn(2+).

The protein belongs to the DXR family. It depends on Mg(2+) as a cofactor. Mn(2+) is required as a cofactor.

It catalyses the reaction 2-C-methyl-D-erythritol 4-phosphate + NADP(+) = 1-deoxy-D-xylulose 5-phosphate + NADPH + H(+). The protein operates within isoprenoid biosynthesis; isopentenyl diphosphate biosynthesis via DXP pathway; isopentenyl diphosphate from 1-deoxy-D-xylulose 5-phosphate: step 1/6. In terms of biological role, catalyzes the NADPH-dependent rearrangement and reduction of 1-deoxy-D-xylulose-5-phosphate (DXP) to 2-C-methyl-D-erythritol 4-phosphate (MEP). In Nostoc sp. (strain PCC 7120 / SAG 25.82 / UTEX 2576), this protein is 1-deoxy-D-xylulose 5-phosphate reductoisomerase.